Reading from the N-terminus, the 72-residue chain is Small ribosomal subunit protein eS17 (72 aa).

This sequence belongs to the eukaryotic ribosomal protein eS17 family.

The sequence is that of Small ribosomal subunit protein eS17 from Nanoarchaeum equitans (strain Kin4-M).